The chain runs to 421 residues: UPF0229 protein lpl2726 (421 aa).

A disordered region spans residues 83 to 110; sequence IAGDRIKRPGGGGSGGAGGNASDSGEGE. Residues 91–101 show a composition bias toward gly residues; sequence PGGGGSGGAGG.

It belongs to the UPF0229 family.

This Legionella pneumophila (strain Lens) protein is UPF0229 protein lpl2726.